The following is a 186-amino-acid chain: MPIQNSPYQGFATLLNSSGHSVSPAELHGLLLGRSCAGAGFNAEEWLIDAAELLESEPQDNVRNALIGLQEMVKSELTGDDVTVVLLLPNDDAPLAERAAALGEWCQGFLTGFGLNCRDSSMLSTEATEVLQDLAAISQVQDALEESEDGESDYMEVMEYLRVAPLLLFSETKKADVPPAAKPSLH.

Belongs to the UPF0149 family.

The polypeptide is UPF0149 protein Pfl01_5435 (Pseudomonas fluorescens (strain Pf0-1)).